Consider the following 358-residue polypeptide: tRNA-specific 2-thiouridylase MnmA 2 (358 aa).

ATP is bound by residues 11-18 (GMSGGVDS) and Met37. Cys106 functions as the Nucleophile in the catalytic mechanism. Cys106 and Cys202 are joined by a disulfide. Residue Gly130 coordinates ATP. The tract at residues 152 to 154 (KDQ) is interaction with tRNA. The Cysteine persulfide intermediate role is filled by Cys202. Residues 308–309 (RY) are interaction with tRNA.

It belongs to the MnmA/TRMU family.

The protein resides in the cytoplasm. It carries out the reaction S-sulfanyl-L-cysteinyl-[protein] + uridine(34) in tRNA + AH2 + ATP = 2-thiouridine(34) in tRNA + L-cysteinyl-[protein] + A + AMP + diphosphate + H(+). Its function is as follows. Catalyzes the 2-thiolation of uridine at the wobble position (U34) of tRNA, leading to the formation of s(2)U34. The protein is tRNA-specific 2-thiouridylase MnmA 2 of Clostridium tetani (strain Massachusetts / E88).